The primary structure comprises 131 residues: Profilin-9 (131 aa).

An intrachain disulfide couples C13 to C115. Residues 81–97 carry the Involved in PIP2 interaction motif; the sequence is AVTRGKKGAGGITIKKT. T111 carries the post-translational modification Phosphothreonine.

Belongs to the profilin family. In terms of assembly, occurs in many kinds of cells as a complex with monomeric actin in a 1:1 ratio. Post-translationally, phosphorylated by MAP kinases.

It is found in the cytoplasm. It localises to the cytoskeleton. Binds to actin and affects the structure of the cytoskeleton. At high concentrations, profilin prevents the polymerization of actin, whereas it enhances it at low concentrations. This chain is Profilin-9, found in Phleum pratense (Common timothy).